A 469-amino-acid chain; its full sequence is Uronate isomerase (469 aa).

The protein belongs to the metallo-dependent hydrolases superfamily. Uronate isomerase family.

It carries out the reaction D-glucuronate = D-fructuronate. The catalysed reaction is aldehydo-D-galacturonate = keto-D-tagaturonate. It participates in carbohydrate metabolism; pentose and glucuronate interconversion. This is Uronate isomerase from Edwardsiella ictaluri (strain 93-146).